Reading from the N-terminus, the 310-residue chain is NADH-cytochrome b5 reductase 1 (310 aa).

The helical transmembrane segment at 32-52 threads the bilayer; it reads EWLPYAVALAAILSGGKVFSN. Residues 61 to 166 enclose the FAD-binding FR-type domain; the sequence is TEFQNFELKE…RGPKGAMVYT (106 aa). FAD contacts are provided by residues 146–161 and 172–209; these read AGLR…GPKG and KIGM…QVDL.

Belongs to the flavoprotein pyridine nucleotide cytochrome reductase family. In terms of assembly, monomer. Component of the 2-(3-amino-3-carboxypropyl)histidine synthase complex composed of DPH1, DPH2, DPH3 and a NADH-dependent reductase, predominantly CBR1. Requires FAD as cofactor.

It localises to the mitochondrion outer membrane. It catalyses the reaction 2 Fe(III)-[cytochrome b5] + NADH = 2 Fe(II)-[cytochrome b5] + NAD(+) + H(+). The enzyme catalyses 2 Fe(3+)-[Dph3] + NADH = 2 Fe(2+)-[Dph3] + NAD(+) + H(+). It participates in protein modification; peptidyl-diphthamide biosynthesis. NADH-dependent reductase for DPH3 and cytochrome b5. Required for the first step of diphthamide biosynthesis, a post-translational modification of histidine which occurs in elongation factor 2. DPH1 and DPH2 transfer a 3-amino-3-carboxypropyl (ACP) group from S-adenosyl-L-methionine (SAM) to a histidine residue, the reaction is assisted by a reduction system comprising DPH3 and a NADH-dependent reductase, predominantly CBR1. By reducing DPH3, also involved in the formation of the tRNA wobble base modification mcm5s 2U (5-methoxycarbonylmethyl-2-thiouridine), mediated by the elongator complex. The cytochrome b5/NADH cytochrome b5 reductase electron transfer system supports the catalytic activity of several sterol biosynthetic enzymes. The sequence is that of NADH-cytochrome b5 reductase 1 (CBR1) from Ajellomyces capsulatus (strain NAm1 / WU24) (Darling's disease fungus).